The sequence spans 361 residues: Septin-12 (361 aa).

The region spanning 45 to 316 (MGFEFNIMVV…ENYRIIRLKE (272 aa)) is the Septin-type G domain. An interaction with SEPTIN7 region spans residues 45–318 (MGFEFNIMVV…YRIIRLKESH (274 aa)). The interval 55-62 (GQSGLGKS) is G1 motif. GTP contacts are provided by residues 55-62 (GQSGLGKS), T88, G114, 194-202 (RADSLTIEE), G250, and R265. A G3 motif region spans residues 111–114 (DTPG). Residues 193-196 (ARAD) form a G4 motif region. The tract at residues 257 to 361 (VNGRCVLGRK…WAEDNSDEDF (105 aa)) is self-association (via N-terminus) to polymerize octameric septin 12-7-6-2/4-2/4-6-7-12 filaments. The disordered stretch occupies residues 333–361 (PPPAPTGTRASPGPAKMCRWAEDNSDEDF). Positions 338 to 347 (TGTRASPGPA) are enriched in low complexity.

The protein belongs to the TRAFAC class TrmE-Era-EngA-EngB-Septin-like GTPase superfamily. Septin GTPase family. As to quaternary structure, septins polymerize into heterooligomeric protein complexes that form filaments, and can associate with cellular membranes, actin filaments and microtubules. GTPase activity is required for filament formation. Interacts with SEPTIN6 and SEPTIN11. Component of a octameric complex consisting of SEPTIN12, SEPTIN7, SEPTIN6 and SEPTIN2 or SEPTIN4 in the order 12-7-6-2-2-6-7-12 or 12-7-6-4-4-6-7-12 and located in the sperm annulus; the octamer polymerizes into filaments via the SEPTIN12 N- and C-termini; the SEPTIN12:SEPTIN7 association is mediated by the GTP-binding domains. Interacts with SPAG4 and LMNB1. Associates with alpha- and beta-tubulins.

The protein resides in the cytoplasm. It is found in the cytoskeleton. Its subcellular location is the spindle. The protein localises to the cell projection. It localises to the cilium. The protein resides in the flagellum. In terms of biological role, filament-forming cytoskeletal GTPase. May play a role in cytokinesis (Potential). Involved in spermatogenesis. Involved in the morphogenesis of sperm heads and the elongation of sperm tails probably implicating the association with alpha- and beta-tubulins. Forms a filamentous structure with SEPTIN7, SEPTIN6, SEPTIN2 and probably SEPTIN4 at the sperm annulus which is required for the structural integrity and motility of the sperm tail during postmeiotic differentiation. This is Septin-12 from Bos taurus (Bovine).